We begin with the raw amino-acid sequence, 453 residues long: Allantoinase (453 aa).

Histidine 59, histidine 61, lysine 146, histidine 186, histidine 242, and aspartate 315 together coordinate Zn(2+). An N6-carboxylysine modification is found at lysine 146.

The protein belongs to the metallo-dependent hydrolases superfamily. Allantoinase family. As to quaternary structure, homotetramer. Zn(2+) serves as cofactor. In terms of processing, carboxylation allows a single lysine to coordinate two zinc ions.

It catalyses the reaction (S)-allantoin + H2O = allantoate + H(+). It participates in nitrogen metabolism; (S)-allantoin degradation; allantoate from (S)-allantoin: step 1/1. Catalyzes the conversion of allantoin (5-ureidohydantoin) to allantoic acid by hydrolytic cleavage of the five-member hydantoin ring. This Salmonella gallinarum (strain 287/91 / NCTC 13346) protein is Allantoinase.